The following is a 2635-amino-acid chain: Protein unc-79 homolog (2635 aa).

A phosphoserine mark is found at serine 754 and serine 758. Disordered regions lie at residues 907-929, 1538-1575, 1607-1678, 1693-1832, 1863-1909, and 1929-1950; these read GPEG…NCTE, IAQR…DARR, LIDL…SVLS, SKDF…FKIQ, LGEQ…TQYR, and LEHQ…IQPG. Over residues 1666 to 1678 the composition is skewed to low complexity; it reads SSPSVPSHPSVLS. Polar residues predominate over residues 1699-1713; sequence KDSGNNQSAGNTDSA. Residues 1761–1775 show a composition bias toward basic and acidic residues; it reads LDDHPDPGTEGEKPG. Polar residues-rich tracts occupy residues 1897 to 1909 and 1929 to 1947; these read ETSS…TQYR and LEHQ…TEQI. 2 helical membrane passes run 2223 to 2243 and 2466 to 2486; these read LLSF…ELCG and VLHM…TVYC.

Belongs to the unc-79 family. In terms of assembly, NALCN complex consists of NALCN and auxiliary subunits, UNC79, UNC80 and NACL1. These auxiliary subunits are essential for the NALCN channel function. UNC80 bridges NALCN to UNC79.

Its subcellular location is the cell membrane. In terms of biological role, auxiliary subunit of the NALCN sodium channel complex, a voltage-gated ion channel responsible for the resting Na(+) permeability that controls neuronal excitability. Activated by neuropeptides substance P, neurotensin, and extracellular calcium that regulates neuronal excitability by controlling the sizes of NALCN-dependent sodium-leak current. This is Protein unc-79 homolog (UNC79) from Homo sapiens (Human).